We begin with the raw amino-acid sequence, 217 residues long: 3-isopropylmalate dehydratase small subunit (217 aa).

The protein belongs to the LeuD family. LeuD type 1 subfamily. In terms of assembly, heterodimer of LeuC and LeuD.

It catalyses the reaction (2R,3S)-3-isopropylmalate = (2S)-2-isopropylmalate. It participates in amino-acid biosynthesis; L-leucine biosynthesis; L-leucine from 3-methyl-2-oxobutanoate: step 2/4. In terms of biological role, catalyzes the isomerization between 2-isopropylmalate and 3-isopropylmalate, via the formation of 2-isopropylmaleate. The protein is 3-isopropylmalate dehydratase small subunit of Paracidovorax citrulli (strain AAC00-1) (Acidovorax citrulli).